The primary structure comprises 304 residues: Tetrahydromethanopterin S-methyltransferase subunit E (304 aa).

Transmembrane regions (helical) follow at residues 3–23 (PLIGMGVLALIGVAATIAGAS), 77–97 (VLISEFTVSPLFALVFGSVIA), 133–153 (PAIMGYAFITTFCVLIVSYLM), 155–175 (VVLGHPFPLTMLAFIWGITIG), 233–253 (PTTGIAFGMTVFLGSWITTIF), and 259–279 (LSMGWLSVIAGVIIVLILIIW).

Belongs to the MtrE family. In terms of assembly, the complex is composed of 8 subunits; MtrA, MtrB, MtrC, MtrD, MtrE, MtrF, MtrG and MtrH.

The protein resides in the cell membrane. The catalysed reaction is 5-methyl-5,6,7,8-tetrahydromethanopterin + coenzyme M + 2 Na(+)(in) = 5,6,7,8-tetrahydromethanopterin + methyl-coenzyme M + 2 Na(+)(out). It functions in the pathway one-carbon metabolism; methanogenesis from CO(2); methyl-coenzyme M from 5,10-methylene-5,6,7,8-tetrahydromethanopterin: step 2/2. Part of a complex that catalyzes the formation of methyl-coenzyme M and tetrahydromethanopterin from coenzyme M and methyl-tetrahydromethanopterin. This is an energy-conserving, sodium-ion translocating step. In Methanosarcina mazei (strain ATCC BAA-159 / DSM 3647 / Goe1 / Go1 / JCM 11833 / OCM 88) (Methanosarcina frisia), this protein is Tetrahydromethanopterin S-methyltransferase subunit E (mtrE).